Consider the following 517-residue polypeptide: Arp2/3 complex-activating protein rickA (517 aa).

2 disordered regions span residues 313 to 441 (LENN…SKPA) and 461 to 517 (KVSD…SFVR). Pro residues-rich tracts occupy residues 319–340 (PPSPLPENNIPSPPPPPPPSPL) and 347–378 (SSPPPPPPPPLPENNIPSPPPPPPPPPPPPMA). In terms of domain architecture, WH2 spans 406–423 (DTSDLMREIAGPKKLKKV). The tract at residues 444-477 (VNALSGLESIFARRAVIKVSDSSSSESDSGNWSD) is central and acidic domains. The segment covering 463-479 (SDSSSSESDSGNWSDVS) has biased composition (low complexity). The segment covering 500–517 (THAQKINNRNSQNPSFVR) has biased composition (polar residues).

In terms of assembly, homodimer.

Its subcellular location is the cell surface. Functionally, recruits and activates the Arp2/3 complex, which in turn leads to actin polymerization, promoting Rickettsia motility during infection. This chain is Arp2/3 complex-activating protein rickA (rickA), found in Rickettsia conorii (strain ATCC VR-613 / Malish 7).